The chain runs to 320 residues: Cytochrome c biogenesis protein CcsA (320 aa).

The next 8 helical transmembrane spans lie at 14–34 (SFFL…YINI), 37–57 (ITIL…TFLL), 68–88 (LSNL…IHLI), 97–117 (WLGI…TLSL), 143–163 (MMLS…ILII), 228–248 (VISL…VWAN), 263–283 (WALI…IKGW), and 289–309 (AIIA…VNLL).

This sequence belongs to the CcmF/CycK/Ccl1/NrfE/CcsA family. In terms of assembly, may interact with Ccs1.

It is found in the plastid. It localises to the chloroplast thylakoid membrane. Its function is as follows. Required during biogenesis of c-type cytochromes (cytochrome c6 and cytochrome f) at the step of heme attachment. This is Cytochrome c biogenesis protein CcsA from Marchantia polymorpha (Common liverwort).